The primary structure comprises 475 residues: Sulfate adenylyltransferase subunit 1 (475 aa).

The tr-type G domain maps to Lys25 to Arg239. The interval Gly34–Ser41 is G1. GTP is bound at residue Gly34 to Ser41. A G2 region spans residues Gly92–Asp96. Residues Asp113 to Gly116 form a G3 region. Residues Asp113–His117 and Asn168–Asp171 contribute to the GTP site. The tract at residues Asn168–Asp171 is G4. A G5 region spans residues Ser206–Leu208.

The protein belongs to the TRAFAC class translation factor GTPase superfamily. Classic translation factor GTPase family. CysN/NodQ subfamily. In terms of assembly, heterodimer composed of CysD, the smaller subunit, and CysN.

It carries out the reaction sulfate + ATP + H(+) = adenosine 5'-phosphosulfate + diphosphate. The protein operates within sulfur metabolism; hydrogen sulfide biosynthesis; sulfite from sulfate: step 1/3. In terms of biological role, with CysD forms the ATP sulfurylase (ATPS) that catalyzes the adenylation of sulfate producing adenosine 5'-phosphosulfate (APS) and diphosphate, the first enzymatic step in sulfur assimilation pathway. APS synthesis involves the formation of a high-energy phosphoric-sulfuric acid anhydride bond driven by GTP hydrolysis by CysN coupled to ATP hydrolysis by CysD. This chain is Sulfate adenylyltransferase subunit 1, found in Shigella flexneri serotype 5b (strain 8401).